The following is a 111-amino-acid chain: Cytochrome c oxidase subunit 6A1, mitochondrial (111 aa).

The transit peptide at 1–26 directs the protein to the mitochondrion; the sequence is MASAVLSASRVSRPLGRALPGLRRPM. Residues 27 to 36 are Mitochondrial matrix-facing; it reads SSGAHGEEGS. The helical transmembrane segment at 37–61 threads the bilayer; that stretch reads ARMWKALTYFVALPGVGVSMLNVFL. Residues 62-111 lie on the Mitochondrial intermembrane side of the membrane; that stretch reads KSRHEEHERPPFVAYPHLRIRTKPFPWGDGNHTLFHNPHVNPLPTGYEDE.

This sequence belongs to the cytochrome c oxidase subunit 6A family. As to quaternary structure, component of the cytochrome c oxidase (complex IV, CIV), a multisubunit enzyme composed of 14 subunits. The complex is composed of a catalytic core of 3 subunits MT-CO1, MT-CO2 and MT-CO3, encoded in the mitochondrial DNA, and 11 supernumerary subunits COX4I, COX5A, COX5B, COX6A, COX6B, COX6C, COX7A, COX7B, COX7C, COX8 and NDUFA4, which are encoded in the nuclear genome. The complex exists as a monomer or a dimer and forms supercomplexes (SCs) in the inner mitochondrial membrane with NADH-ubiquinone oxidoreductase (complex I, CI) and ubiquinol-cytochrome c oxidoreductase (cytochrome b-c1 complex, complex III, CIII), resulting in different assemblies (supercomplex SCI(1)III(2)IV(1) and megacomplex MCI(2)III(2)IV(2)).

The protein localises to the mitochondrion inner membrane. Its pathway is energy metabolism; oxidative phosphorylation. In terms of biological role, component of the cytochrome c oxidase, the last enzyme in the mitochondrial electron transport chain which drives oxidative phosphorylation. The respiratory chain contains 3 multisubunit complexes succinate dehydrogenase (complex II, CII), ubiquinol-cytochrome c oxidoreductase (cytochrome b-c1 complex, complex III, CIII) and cytochrome c oxidase (complex IV, CIV), that cooperate to transfer electrons derived from NADH and succinate to molecular oxygen, creating an electrochemical gradient over the inner membrane that drives transmembrane transport and the ATP synthase. Cytochrome c oxidase is the component of the respiratory chain that catalyzes the reduction of oxygen to water. Electrons originating from reduced cytochrome c in the intermembrane space (IMS) are transferred via the dinuclear copper A center (CU(A)) of subunit 2 and heme A of subunit 1 to the active site in subunit 1, a binuclear center (BNC) formed by heme A3 and copper B (CU(B)). The BNC reduces molecular oxygen to 2 water molecules unsing 4 electrons from cytochrome c in the IMS and 4 protons from the mitochondrial matrix. The sequence is that of Cytochrome c oxidase subunit 6A1, mitochondrial (Cox6a1) from Mus musculus (Mouse).